Consider the following 384-residue polypeptide: Glucans biosynthesis protein C (384 aa).

Helical transmembrane passes span Ala17–Trp37, Phe54–Leu74, Val91–Gln111, Leu140–Phe160, Ala173–Ile193, Phe212–Ile232, Phe240–Leu260, Thr274–Gly294, Ala311–Thr331, and Leu338–Ile358.

It belongs to the acyltransferase 3 family. OpgC subfamily.

The protein resides in the cell membrane. It participates in glycan metabolism; osmoregulated periplasmic glucan (OPG) biosynthesis. Necessary for the succinyl substitution of periplasmic glucans. Could catalyze the transfer of succinyl residues from the cytoplasmic side of the membrane to the nascent glucan backbones on the periplasmic side of the membrane. The polypeptide is Glucans biosynthesis protein C (Salmonella schwarzengrund (strain CVM19633)).